Here is a 524-residue protein sequence, read N- to C-terminus: Nucleobase-ascorbate transporter 2 (524 aa).

12 consecutive transmembrane segments (helical) span residues 41–61, 69–89, 91–111, 133–153, 155–175, 179–199, 217–237, 282–302, 359–379, 380–400, 419–439, and 457–477; these read YILALGTAVMIPSILVPMMGG, VVQTLLFLQGVNTLLQTLFGT, LPTVIGGSYAFMVPIISIIHD, GAIIVASSVQIILGFSQMWAI, SRFFSPIGMVPVIALTGFGLF, FPVVGNCVEIGLPMLILFVIF, FALIIALIIVWAYAHVLTASG, AFAMMAAVLVSLIESTGAFKA, RVIQISAGFMIFFSMLGKFGA, LFASIPFTIFAAVYCVLFGLV, LFIVGVSLFLGLSIPEYFRDF, and DFLNTIFLSSPMVALMVAVFL.

Belongs to the nucleobase:cation symporter-2 (NCS2) (TC 2.A.40) family. In terms of tissue distribution, expressed in cotyledons 10 days after imbibition (DAI). Expressed in the minor and major veins of cotyledons and leaves, in the shoot apex and pedicels. Expressed in the root meristems, root tips and lateral root primordia.

The protein resides in the membrane. The protein is Nucleobase-ascorbate transporter 2 (NAT2) of Arabidopsis thaliana (Mouse-ear cress).